The sequence spans 71 residues: UPF0346 protein BCQ_2236 (71 aa).

Belongs to the UPF0346 family.

The protein is UPF0346 protein BCQ_2236 of Bacillus cereus (strain Q1).